Consider the following 78-residue polypeptide: Acyl carrier protein (78 aa).

Residues 4-78 form the Carrier domain; that stretch reads AEIRDKVYDI…QQAIDYIVKK (75 aa). Position 39 is an O-(pantetheine 4'-phosphoryl)serine (serine 39).

Belongs to the acyl carrier protein (ACP) family. Post-translationally, 4'-phosphopantetheine is transferred from CoA to a specific serine of apo-ACP by AcpS. This modification is essential for activity because fatty acids are bound in thioester linkage to the sulfhydryl of the prosthetic group.

The protein resides in the cytoplasm. It functions in the pathway lipid metabolism; fatty acid biosynthesis. In terms of biological role, carrier of the growing fatty acid chain in fatty acid biosynthesis. This is Acyl carrier protein from Chlorobium luteolum (strain DSM 273 / BCRC 81028 / 2530) (Pelodictyon luteolum).